Here is a 433-residue protein sequence, read N- to C-terminus: Transcription factor elt-2 (433 aa).

Disordered regions lie at residues 1-47 (MDNN…ELPR) and 194-235 (GQPP…RQGL). The segment covering 27 to 43 (PTQNMDPPEQNNESQLS) has biased composition (polar residues). Low complexity predominate over residues 211–234 (AKQSSKKSSSSNRGSNGSASRRQG). The segment at 237–261 (CSNCNGTNTTLWRRNAEGDPVCNAC) adopts a GATA-type zinc-finger fold. The interval 275-332 (SMKKEGALQTRKRKSKSGDSSTPSTSRARERKFERASSSTEKAQRSSNRRAGSAKADR) is disordered. Polar residues predominate over residues 310-324 (ASSSTEKAQRSSNRR).

In terms of assembly, interacts with lag-1. Interacts with pha-4. Interacts with rpt-6. In terms of processing, may be ubiquitinated in response to infection by B.pseudomallei. Expressed in the intestine.

It localises to the nucleus. Functionally, transcriptional activator that binds to the consensus sequence 5'-[AT]GATA[AG]-3'. Predominantly directs the transcription of intestinal genes such as ges-1, cpr-6, pho-1, ftn-1, vit-2 and lev-11, and itself. Required for gut-specific differentiation, specifically acting with the GATA region-binding transcription factor elt-7 to control normal gene expression and promote normal formation of the intestine. Regulates intestinal gene expression in response to hypoxia to promote longevity. Modulation of longevity may, in part, be the result of regulation of expression of daf-16 isoforms d and f in the intestine. Regulates tissue specific gene expression at basal levels and in response to bacterial infection in the intestine to control innate immunity. Plays a role in the induction of metal-responsive genes, activating gene expression from zinc-activated promoters and iron-dependent promoters and enhancers. May regulate the expression of genes that control sensitivity to oxidative stress, in a mab-3-dependent manner, and osmotic stress, in conjunction with the GATA region-binding transcription factor elt-3. May play a role in sphingolipid signaling by regulating the expression of the sphingosine-1-phosphate degrading enzyme, sphingosine-1-phosphate lyase. May act with the Notch signaling pathway to promote endodermal gene expression. Has a protective role in response to infection by Gram-negative bacteria such as S.enterica, E.coli, P.aeruginosa and B.pseudomallei, Gram-positive bacterium E.faecalis and fungal pathogen C.neoformans. An association with the 26S proteasome regulatory subunit rpt-6, in part, controls gene expression in response to infection by P.aeruginosa. Regulates gene expression during the recovery phase following a bacterial infection. May act with p38-activated transcription factors to control p38 gene induction in response to bacterial infection. Controls lysosome formation in the intestine by controlling lysosomal gene expression. The protein is Transcription factor elt-2 of Caenorhabditis elegans.